The sequence spans 284 residues: Acetylglutamate kinase (284 aa).

Residues 64–65, Arg86, and Asn179 contribute to the substrate site; that span reads GG.

Belongs to the acetylglutamate kinase family. ArgB subfamily.

It localises to the cytoplasm. It catalyses the reaction N-acetyl-L-glutamate + ATP = N-acetyl-L-glutamyl 5-phosphate + ADP. The protein operates within amino-acid biosynthesis; L-arginine biosynthesis; N(2)-acetyl-L-ornithine from L-glutamate: step 2/4. Functionally, catalyzes the ATP-dependent phosphorylation of N-acetyl-L-glutamate. This is Acetylglutamate kinase from Acaryochloris marina (strain MBIC 11017).